The primary structure comprises 404 residues: Argininosuccinate synthase (404 aa).

ATP is bound by residues 11–19 (AYSGGLDTS) and A38. Residues Y91 and S96 each coordinate L-citrulline. An ATP-binding site is contributed by G121. The L-aspartate site is built by T123, N127, and D128. N127 contributes to the L-citrulline binding site. L-citrulline is bound by residues R131, S181, S190, E266, and Y278.

Belongs to the argininosuccinate synthase family. Type 1 subfamily. In terms of assembly, homotetramer.

Its subcellular location is the cytoplasm. It carries out the reaction L-citrulline + L-aspartate + ATP = 2-(N(omega)-L-arginino)succinate + AMP + diphosphate + H(+). The protein operates within amino-acid biosynthesis; L-arginine biosynthesis; L-arginine from L-ornithine and carbamoyl phosphate: step 2/3. The chain is Argininosuccinate synthase from Sulfurimonas denitrificans (strain ATCC 33889 / DSM 1251) (Thiomicrospira denitrificans (strain ATCC 33889 / DSM 1251)).